The sequence spans 196 residues: DnaA initiator-associating protein DiaA (196 aa).

In terms of domain architecture, SIS spans 34 to 196 (LVQSLLNGNK…DNTLFPHQDD (163 aa)).

Belongs to the SIS family. DiaA subfamily. As to quaternary structure, homotetramer; dimer of dimers.

Required for the timely initiation of chromosomal replication via direct interactions with the DnaA initiator protein. The polypeptide is DnaA initiator-associating protein DiaA (Yersinia pseudotuberculosis serotype O:1b (strain IP 31758)).